The primary structure comprises 505 residues: Zinc metalloproteinase/disintegrin (505 aa).

A signal peptide spans 1–20; it reads MIQVLLVIICLAAFPYQGTS. Positions 21–214 are excised as a propeptide; the sequence is IILESGNVND…PIKKASQSNL (194 aa). 2 consecutive repeat copies span residues 153–179 and 180–206. The region spanning 220–416 is the Peptidase M12B domain; the sequence is RYIELVIVAD…QKPQCILNKP (197 aa). Ca(2+) is bound by residues E223 and D307. Residue H356 coordinates Zn(2+). The active site involves E357. Zn(2+) contacts are provided by H360 and H366. 2 disulfide bridges follow: C371/C395 and C373/C378. C411 and N414 together coordinate Ca(2+). Residues 417 to 432 constitute a propeptide that is removed on maturation; the sequence is LRTDTVSTPVSGNELL. A Disintegrin domain is found at 424 to 505; the sequence is TPVSGNELLE…AGCPRNPFHA (82 aa). Cystine bridges form between C438-C453, C440-C448, C447-C470, C461-C467, C466-C491, and C479-C498. Positions 483–485 match the Cell attachment site motif; the sequence is RGD.

It belongs to the venom metalloproteinase (M12B) family. P-II subfamily. P-IIa sub-subfamily. As to quaternary structure, monomer. It depends on Zn(2+) as a cofactor. In terms of tissue distribution, expressed by the venom gland.

It is found in the secreted. Its function is as follows. Impairs hemostasis in the envenomed animal. Inhibits platelet aggregation induced by ADP, thrombin, platelet-activating factor and collagen. Acts by inhibiting fibrinogen interaction with platelet receptors GPIIb/GPIIIa (ITGA2B/ITGB3). This is Zinc metalloproteinase/disintegrin from Gloydius brevicauda (Korean slamosa snake).